The chain runs to 345 residues: EWRFSRIHCDIFVTLDVMMCTASILNLCAISIDRYTAVAMPMLYNTRYSSKRRVTVMISVVWVLSFAISCPLLFGLNNTASTVCIIDNPAFVIYSSIVSFYVPFIVTLLVYVQIYIVLRKRRKRVNTKRNSHGVGVDAHKDKCTHPEDVKLCAVFVKSNGSFPAEKKKVEAGNHPEDMEMEMMSSTSPPEKTKHKSASPEHQLAVPATSNQCNNVNLPTPVNSPYKAENNGHSKDSTQPAKVFEIQSMPNGKTRTSIKTMSKRKISQHKEKKATQMLAIVLGVFIICWLPFFITHILNMHCNCNIPQALYSAFTWLGYVNSAVNPIIYTTFNVEFRKAFIKILHC.

Residues Glu-1–Asp-10 lie on the Extracellular side of the membrane. The cysteines at positions 9 and 84 are disulfide-linked. Residues Ile-11–Ile-32 form a helical membrane-spanning segment. Residues Asp-33–Arg-53 are Cytoplasmic-facing. Residues Val-54 to Phe-74 traverse the membrane as a helical segment. Residues Gly-75–Ala-90 lie on the Extracellular side of the membrane. The N-linked (GlcNAc...) asparagine glycan is linked to Asn-77. Residues Phe-91 to Tyr-115 traverse the membrane as a helical segment. Topologically, residues Ile-116 to Gln-275 are cytoplasmic. The segment covering Lys-166–Asp-177 has biased composition (basic and acidic residues). Residues Lys-166–Pro-199 form a disordered region. Residues Met-276–Leu-297 traverse the membrane as a helical segment. Topologically, residues Asn-298–Ser-311 are extracellular. A disulfide bond links Cys-301 and Cys-303. Residues Ala-312–Val-333 traverse the membrane as a helical segment. Over Glu-334–Cys-345 the chain is Cytoplasmic. Cys-345 is lipidated: S-palmitoyl cysteine.

It belongs to the G-protein coupled receptor 1 family. Palmitoylated. Palmitoylation is probably required for proper localization to the plasma membrane and stability of the receptor. As to expression, brain; pituitary.

It localises to the cell membrane. It is found in the golgi apparatus membrane. Its function is as follows. This is one of the five types (D1 to D5) of receptors for dopamine. The activity of this receptor is mediated by G proteins which inhibits adenylyl cyclase. In Xenopus D2R is involved in the regulation of the melanotrope cells of the intermediate pituitary during background adaptation of the animal. The polypeptide is D(2) dopamine receptor B (drd2-b) (Xenopus laevis (African clawed frog)).